The primary structure comprises 231 residues: Orotidine 5'-phosphate decarboxylase (231 aa).

Substrate contacts are provided by residues aspartate 11, lysine 33, 60–69, threonine 117, arginine 178, glutamine 187, glycine 207, and arginine 208; that span reads DLKFHDIPNT. Lysine 62 acts as the Proton donor in catalysis.

The protein belongs to the OMP decarboxylase family. Type 1 subfamily. Homodimer.

The enzyme catalyses orotidine 5'-phosphate + H(+) = UMP + CO2. It participates in pyrimidine metabolism; UMP biosynthesis via de novo pathway; UMP from orotate: step 2/2. Functionally, catalyzes the decarboxylation of orotidine 5'-monophosphate (OMP) to uridine 5'-monophosphate (UMP). The sequence is that of Orotidine 5'-phosphate decarboxylase from Nitrosomonas eutropha (strain DSM 101675 / C91 / Nm57).